Reading from the N-terminus, the 525-residue chain is Light-independent protochlorophyllide reductase subunit B (525 aa).

Residue D36 participates in [4Fe-4S] cluster binding. D286 (proton donor) is an active-site residue. 421-422 contributes to the substrate binding site; that stretch reads GL.

Belongs to the ChlB/BchB/BchZ family. Protochlorophyllide reductase is composed of three subunits; ChlL, ChlN and ChlB. Forms a heterotetramer of two ChlB and two ChlN subunits. It depends on [4Fe-4S] cluster as a cofactor.

It carries out the reaction chlorophyllide a + oxidized 2[4Fe-4S]-[ferredoxin] + 2 ADP + 2 phosphate = protochlorophyllide a + reduced 2[4Fe-4S]-[ferredoxin] + 2 ATP + 2 H2O. It participates in porphyrin-containing compound metabolism; chlorophyll biosynthesis (light-independent). Component of the dark-operative protochlorophyllide reductase (DPOR) that uses Mg-ATP and reduced ferredoxin to reduce ring D of protochlorophyllide (Pchlide) to form chlorophyllide a (Chlide). This reaction is light-independent. The NB-protein (ChlN-ChlB) is the catalytic component of the complex. This is Light-independent protochlorophyllide reductase subunit B from Prochlorococcus marinus (strain NATL1A).